Here is an 879-residue protein sequence, read N- to C-terminus: mRNA-binding protein PUF3 (879 aa).

Thr83 carries the post-translational modification Phosphothreonine. Phosphoserine occurs at positions 207 and 210. Disordered stretches follow at residues Glu222 to Glu256, Pro344 to Gln417, and Lys443 to Tyr512. Residues Ser237–Ser255 show a composition bias toward low complexity. A compositionally biased stretch (pro residues) spans Ser370–Ser395. Composition is skewed to low complexity over residues Gln398–Gln417, Asn449–Asn463, Thr472–Asn491, and His501–Tyr512. The region spanning His513–Ala871 is the PUM-HD domain. Pumilio repeat units follow at residues Asp538–Asn573, Glu574–Asp609, Gln610–Leu645, Glu646–Ser681, Ser682–Asn717, Glu718–Glu759, Thr760–Ser795, and Asn807–Ile844.

This sequence belongs to the PUF3 family.

The protein localises to the mitochondrion outer membrane. It is found in the cytoplasm. Functionally, RNA-binding protein involved in post-transcriptional regulation. Negatively regulates expression of COX17 by binding to the 3'-UTR of COX17 mRNA. Promotes decay of COX17 mRNA by enhancing its rate of deadenylation and subsequent turnover. Predominantly binds to mRNAs encoding mitochondrial proteins and localizes them to the vicinity of mitochondria for translation. Regulates mitochondrial biogenesis, motility and morphology. The polypeptide is mRNA-binding protein PUF3 (PUF3) (Saccharomyces cerevisiae (strain ATCC 204508 / S288c) (Baker's yeast)).